Reading from the N-terminus, the 166-residue chain is UPF0251 protein UNCMA_27150 (166 aa).

It belongs to the UPF0251 family.

In Methanocella arvoryzae (strain DSM 22066 / NBRC 105507 / MRE50), this protein is UPF0251 protein UNCMA_27150.